A 137-amino-acid chain; its full sequence is uncharacterized protein (137 aa).

The HTH merR-type domain occupies 4–73 (MLTVSEVARK…LEEIADILHL (70 aa)). The H-T-H motif DNA-binding region spans 8–27 (SEVARKLGLNPQTLYFYERI).

This is an uncharacterized protein from Synechocystis sp. (strain ATCC 27184 / PCC 6803 / Kazusa).